Consider the following 128-residue polypeptide: Fluoride-specific ion channel FluC (128 aa).

Helical transmembrane passes span 3 to 23, 33 to 53, 69 to 89, and 99 to 119; these read LYAL…RWWF, TLPL…GAAI, FAIT…AETV, and WTFV…ILGI. The Na(+) site is built by glycine 76 and threonine 79.

This sequence belongs to the fluoride channel Fluc/FEX (TC 1.A.43) family.

It localises to the cell inner membrane. The enzyme catalyses fluoride(in) = fluoride(out). Its activity is regulated as follows. Na(+) is not transported, but it plays an essential structural role and its presence is essential for fluoride channel function. Fluoride-specific ion channel. Important for reducing fluoride concentration in the cell, thus reducing its toxicity. This is Fluoride-specific ion channel FluC from Nitrosospira multiformis (strain ATCC 25196 / NCIMB 11849 / C 71).